A 208-amino-acid chain; its full sequence is MSETVPAASAGAVPAVMEKPLTKKRGKKPAGLTSASRKAPNLSVSKLITEALSVSQERVGMSLAALKKALAAAGYDVEKNNSRIKLSLKSLVNKGILVQTRGTGASGSFKLSKKVLPKSTRRKANKSASAKTKKLVLSRDSKSPKTAKTNKRAKKPRATAPKKAVRSGRKAKGAKGKQQQKSPVKARATKPKLTQHHKANIRKATSRK.

Low complexity predominate over residues 1-16 (MSETVPAASAGAVPAV). Positions 1 to 40 (MSETVPAASAGAVPAVMEKPLTKKRGKKPAGLTSASRKAP) are disordered. Ser9 is modified (phosphoserine). One can recognise an H15 domain in the interval 40-113 (PNLSVSKLIT…GASGSFKLSK (74 aa)). Residue Arg58 is modified to Citrulline. The segment at 102–208 (GTGASGSFKL…ANIRKATSRK (107 aa)) is disordered. The span at 111 to 136 (LSKKVLPKSTRRKANKSASAKTKKLV) shows a compositional bias: basic residues. Ser143 is subject to Phosphoserine. The span at 148 to 157 (KTNKRAKKPR) shows a compositional bias: basic residues. A Phosphothreonine modification is found at Thr159. A compositionally biased stretch (basic residues) spans 163–175 (KAVRSGRKAKGAK). Ser167 and Ser182 each carry phosphoserine. Positions 187–208 (RATKPKLTQHHKANIRKATSRK) are enriched in basic residues.

It belongs to the histone H1/H5 family. In terms of processing, phosphorylated in early spermatids. Post-translationally, citrullination at Arg-58 (H1R54ci) by PADI4 takes place within the DNA-binding site of H1 and results in its displacement from chromatin and global chromatin decondensation, thereby promoting pluripotency and stem cell maintenance.

Functionally, testis-specific histone H1 that forms less compacted chromatin compared to other H1 histone subtypes. Formation of more relaxed chromatin may be required to promote chromatin architecture required for proper chromosome regulation during meiosis, such as homologous recombination. Histones H1 act as linkers that bind to nucleosomes and compact polynucleosomes into a higher-order chromatin configuration. The sequence is that of Histone H1t from Macaca mulatta (Rhesus macaque).